We begin with the raw amino-acid sequence, 197 residues long: GTP cyclohydrolase-2 (197 aa).

Residue 49 to 53 (RVHSE) coordinates GTP. Positions 54, 65, and 67 each coordinate Zn(2+). Residues Q70, 92–94 (EGR), and T114 contribute to the GTP site. D126 (proton acceptor) is an active-site residue. R128 (nucleophile) is an active-site residue. The GTP site is built by T149 and K154.

Belongs to the GTP cyclohydrolase II family. Homodimer. Requires Zn(2+) as cofactor.

It catalyses the reaction GTP + 4 H2O = 2,5-diamino-6-hydroxy-4-(5-phosphoribosylamino)-pyrimidine + formate + 2 phosphate + 3 H(+). The protein operates within cofactor biosynthesis; riboflavin biosynthesis; 5-amino-6-(D-ribitylamino)uracil from GTP: step 1/4. Its function is as follows. Catalyzes the conversion of GTP to 2,5-diamino-6-ribosylamino-4(3H)-pyrimidinone 5'-phosphate (DARP), formate and pyrophosphate. The protein is GTP cyclohydrolase-2 of Pectobacterium atrosepticum (strain SCRI 1043 / ATCC BAA-672) (Erwinia carotovora subsp. atroseptica).